The following is a 241-amino-acid chain: Probable transcriptional regulator PhnF (241 aa).

One can recognise an HTH gntR-type domain in the interval 11-78 (PTRYQEIAAK…QGVGVLVLMR (68 aa)). The segment at residues 38–57 (EQQLAARFEVNRHTLRRAID) is a DNA-binding region (H-T-H motif).

Its function is as follows. Belongs to an operon involved in alkylphosphonate uptake and C-P lyase. Exact function not known. By similarity could be a transcriptional regulator. This Escherichia coli (strain K12) protein is Probable transcriptional regulator PhnF (phnF).